The sequence spans 635 residues: Probable potassium transport system protein Kup (635 aa).

12 consecutive transmembrane segments (helical) span residues 22–42, 59–79, 111–131, 148–168, 180–200, 216–236, 259–279, 297–317, 349–369, 378–398, 404–424, and 428–448; these read LVIG…LYTL, VLGI…LKYV, MYVV…DGVI, APKL…MLFL, AFGP…VYNM, VLFF…VVLA, WQFV…ALVL, ALYP…QALI, IYVP…VVGF, AYGV…VIYA, VPAP…CAFF, and IIKF…LFTL.

Belongs to the HAK/KUP transporter (TC 2.A.72) family.

It localises to the cell inner membrane. It carries out the reaction K(+)(in) + H(+)(in) = K(+)(out) + H(+)(out). Functionally, transport of potassium into the cell. Likely operates as a K(+):H(+) symporter. This is Probable potassium transport system protein Kup from Xanthomonas oryzae pv. oryzae (strain KACC10331 / KXO85).